A 603-amino-acid polypeptide reads, in one-letter code: DNA mismatch repair protein MutL (603 aa).

The protein belongs to the DNA mismatch repair MutL/HexB family.

Functionally, this protein is involved in the repair of mismatches in DNA. It is required for dam-dependent methyl-directed DNA mismatch repair. May act as a 'molecular matchmaker', a protein that promotes the formation of a stable complex between two or more DNA-binding proteins in an ATP-dependent manner without itself being part of a final effector complex. In Rhodopseudomonas palustris (strain BisA53), this protein is DNA mismatch repair protein MutL.